Here is a 506-residue protein sequence, read N- to C-terminus: Histidine ammonia-lyase (506 aa).

Residues 143–145 (ASG) constitute a cross-link (5-imidazolinone (Ala-Gly)). Ser144 carries the post-translational modification 2,3-didehydroalanine (Ser).

This sequence belongs to the PAL/histidase family. In terms of processing, contains an active site 4-methylidene-imidazol-5-one (MIO), which is formed autocatalytically by cyclization and dehydration of residues Ala-Ser-Gly.

It is found in the cytoplasm. The catalysed reaction is L-histidine = trans-urocanate + NH4(+). Its pathway is amino-acid degradation; L-histidine degradation into L-glutamate; N-formimidoyl-L-glutamate from L-histidine: step 1/3. The chain is Histidine ammonia-lyase from Salmonella typhimurium (strain LT2 / SGSC1412 / ATCC 700720).